The chain runs to 1997 residues: Otoferlin (1997 aa).

In terms of domain architecture, C2 1 spans 1–98 (MALIVHLKTV…VEENRVEVTD (98 aa)). Over 1-1963 (MALIVHLKTV…ARYFLWHTYR (1963 aa)) the chain is Cytoplasmic. The interval 140–167 (QEEKDSQETDGLLPGSRPSTRISGEKSF) is disordered. C2 domains are found at residues 235-356 (KRSK…HKWA) and 399-530 (IEGN…FLPT). The interval 643 to 692 (VDGMSRPLRPRPRKEPGDEEEVDLIQNSSDDEGDEAGDLASVSSTPPMRP) is disordered. Positions 659–679 (GDEEEVDLIQNSSDDEGDEAG) are enriched in acidic residues. The stretch at 791-820 (RERLKSCMRELESMGQQAKSLRAQVKRHTV) forms a coiled coil. 2 consecutive C2 domains span residues 943-1068 (LHSF…PPRF) and 1115-1241 (RGPI…PNWN). Residues Asp-975, Asp-981, Asp-1037, Asp-1039, and Asp-1045 each contribute to the Ca(2+) site. Disordered regions lie at residues 1253–1272 (LRNG…SMEP), 1296–1326 (DVAE…ESML), and 1343–1402 (LRQH…EKKK). Composition is skewed to acidic residues over residues 1314-1325 (EEPEEEEPDESM) and 1352-1361 (DLEEKEEMES). Basic and acidic residues predominate over residues 1370-1383 (KSKEKSRAAKEEKK). C2 domains lie at 1464–1593 (LPED…ATCG) and 1714–1865 (DMPA…KQCT). Positions 1508, 1514, 1563, 1565, 1571, 1836, 1839, and 1842 each coordinate Ca(2+). A helical transmembrane segment spans residues 1964-1984 (WLLLKFLLLFLLLLLFALFLY). Over 1985–1997 (SLPGYLAKKILGA) the chain is Extracellular.

It belongs to the ferlin family. Interacts with SNAP25; the interaction is direct. Interacts with STX1; the interaction is direct. Interacts with RAB8B. Ca(2+) is required as a cofactor. Isoform 1 is expressed in cochlea and brain. Expressed in the cochlear and vestibular hair cells. Expressed in both inner and outer hair cells (IHCs and OHCs) and cochlear ganglions neurons at postnatal day 2 (P2) and 6 (P6). Expressed only in IHCs at postnatal day 60 (P60) (at protein level). Strongly expressed in brain and inner ear. In the inner ear, it is mainly expressed in the cochlear IHC and vestibular type I sensory hair cells. Weakly expressed in eye, heart, skeletal muscle, liver, kidney, lung and testis.

The protein resides in the cytoplasmic vesicle. It is found in the secretory vesicle. It localises to the synaptic vesicle membrane. The protein localises to the basolateral cell membrane. Its subcellular location is the endoplasmic reticulum membrane. The protein resides in the golgi apparatus membrane. It is found in the presynaptic cell membrane. It localises to the cell membrane. Functionally, key calcium ion sensor involved in the Ca(2+)-triggered synaptic vesicle-plasma membrane fusion and in the control of neurotransmitter release at these output synapses. Interacts in a calcium-dependent manner to the presynaptic SNARE proteins at ribbon synapses of cochlear inner hair cells (IHCs) to trigger exocytosis of neurotransmitter. Also essential to synaptic exocytosis in immature outer hair cells (OHCs). May also play a role within the recycling of endosomes. The protein is Otoferlin (Otof) of Mus musculus (Mouse).